A 599-amino-acid polypeptide reads, in one-letter code: Proline--tRNA ligase (599 aa).

It belongs to the class-II aminoacyl-tRNA synthetase family. ProS type 1 subfamily. In terms of assembly, homodimer.

Its subcellular location is the cytoplasm. It catalyses the reaction tRNA(Pro) + L-proline + ATP = L-prolyl-tRNA(Pro) + AMP + diphosphate. Catalyzes the attachment of proline to tRNA(Pro) in a two-step reaction: proline is first activated by ATP to form Pro-AMP and then transferred to the acceptor end of tRNA(Pro). As ProRS can inadvertently accommodate and process non-cognate amino acids such as alanine and cysteine, to avoid such errors it has two additional distinct editing activities against alanine. One activity is designated as 'pretransfer' editing and involves the tRNA(Pro)-independent hydrolysis of activated Ala-AMP. The other activity is designated 'posttransfer' editing and involves deacylation of mischarged Ala-tRNA(Pro). The misacylated Cys-tRNA(Pro) is not edited by ProRS. This chain is Proline--tRNA ligase, found in Prochlorococcus marinus (strain MIT 9313).